The primary structure comprises 263 residues: Glucosamine-6-phosphate deaminase (263 aa).

Catalysis depends on aspartate 72, which acts as the Proton acceptor; for enolization step. Catalysis depends on aspartate 141, which acts as the For ring-opening step. Histidine 143 serves as the catalytic Proton acceptor; for ring-opening step. The active-site For ring-opening step is the glutamate 148.

This sequence belongs to the glucosamine/galactosamine-6-phosphate isomerase family. NagB subfamily.

It carries out the reaction alpha-D-glucosamine 6-phosphate + H2O = beta-D-fructose 6-phosphate + NH4(+). It participates in amino-sugar metabolism; N-acetylneuraminate degradation; D-fructose 6-phosphate from N-acetylneuraminate: step 5/5. With respect to regulation, allosterically activated by N-acetylglucosamine 6-phosphate (GlcNAc6P). Catalyzes the reversible isomerization-deamination of glucosamine 6-phosphate (GlcN6P) to form fructose 6-phosphate (Fru6P) and ammonium ion. This chain is Glucosamine-6-phosphate deaminase, found in Porphyromonas gingivalis (strain ATCC BAA-308 / W83).